Here is an 86-residue protein sequence, read N- to C-terminus: Large ribosomal subunit protein bL27 (86 aa).

It belongs to the bacterial ribosomal protein bL27 family.

The polypeptide is Large ribosomal subunit protein bL27 (Cupriavidus metallidurans (strain ATCC 43123 / DSM 2839 / NBRC 102507 / CH34) (Ralstonia metallidurans)).